The chain runs to 559 residues: Endoglin (559 aa).

The N-terminal stretch at 1–20 (MKSICCVLVLCLLLCRRSTA) is a signal peptide. Residues 21–473 (SESICELKDV…SCFEFGLSAV (453 aa)) lie on the Extracellular side of the membrane. 2 disulfide bridges follow: Cys-25–Cys-201 and Cys-47–Cys-174. 7 N-linked (GlcNAc...) asparagine glycosylation sites follow: Asn-55, Asn-79, Asn-109, Asn-133, Asn-170, Asn-302, and Asn-352. A disulfide bridge links Cys-381 with Cys-427. A helical transmembrane segment spans residues 474–494 (LGIAFGGFLIGVLLTGALWFI). Residues 495 to 559 (KIRTGHPVAL…TQSTPTSSMA (65 aa)) lie on the Cytoplasmic side of the membrane. The tract at residues 528–559 (RQPVPTHPSPSENSSANASIGSTQSTPTSSMA) is disordered. Residues 536–546 (SPSENSSANAS) show a composition bias toward low complexity. Residues 547–559 (IGSTQSTPTSSMA) show a composition bias toward polar residues.

As to quaternary structure, homodimer; disulfide-linked.

It is found in the cell membrane. In terms of biological role, vascular endothelium glycoprotein that plays an important role in the regulation of angiogenesis. Required for normal structure and integrity of adult vasculature. Important for endothelial cell shape changes in response to blood flow, which drive vascular remodeling and establishment of normal vascular morphology during angiogenesis. The protein is Endoglin of Danio rerio (Zebrafish).